Here is a 679-residue protein sequence, read N- to C-terminus: Protein FAM178B (679 aa).

Residues 70–113 (PLDQGPRCPARRPCSPASAPAPTSPKKPKIQAPGETFPTDWSPP) are disordered. Positions 75–90 (PRCPARRPCSPASAPA) are enriched in low complexity.

This sequence belongs to the FAM178 family.

The sequence is that of Protein FAM178B from Homo sapiens (Human).